The following is a 184-amino-acid chain: dCTP deaminase (184 aa).

107–112 (KSTIAR) is a binding site for dCTP. Glutamate 133 serves as the catalytic Proton donor/acceptor. Positions 152, 166, and 176 each coordinate dCTP.

This sequence belongs to the dCTP deaminase family. Homotrimer.

The enzyme catalyses dCTP + H2O + H(+) = dUTP + NH4(+). Its pathway is pyrimidine metabolism; dUMP biosynthesis; dUMP from dCTP (dUTP route): step 1/2. Functionally, catalyzes the deamination of dCTP to dUTP. The polypeptide is dCTP deaminase (Roseiflexus castenholzii (strain DSM 13941 / HLO8)).